Here is a 301-residue protein sequence, read N- to C-terminus: Putative phosphoenolpyruvate synthase regulatory protein (301 aa).

Over residues 1-24 (MSEPVAPDGAQPAPAGATPQPLQP) the composition is skewed to low complexity. The segment at 1 to 27 (MSEPVAPDGAQPAPAGATPQPLQPIAG) is disordered. Position 181-188 (181-188 (GVSRSGKT)) interacts with ADP.

This sequence belongs to the pyruvate, phosphate/water dikinase regulatory protein family. PSRP subfamily.

It carries out the reaction [pyruvate, water dikinase] + ADP = [pyruvate, water dikinase]-phosphate + AMP + H(+). The enzyme catalyses [pyruvate, water dikinase]-phosphate + phosphate + H(+) = [pyruvate, water dikinase] + diphosphate. Functionally, bifunctional serine/threonine kinase and phosphorylase involved in the regulation of the phosphoenolpyruvate synthase (PEPS) by catalyzing its phosphorylation/dephosphorylation. This is Putative phosphoenolpyruvate synthase regulatory protein from Cupriavidus pinatubonensis (strain JMP 134 / LMG 1197) (Cupriavidus necator (strain JMP 134)).